Here is a 347-residue protein sequence, read N- to C-terminus: Quinolinate synthase (347 aa).

Iminosuccinate contacts are provided by His47 and Ser68. Cys113 is a binding site for [4Fe-4S] cluster. Residues 139-141 (YAN) and Ser156 each bind iminosuccinate. Cys200 lines the [4Fe-4S] cluster pocket. Iminosuccinate is bound by residues 226 to 228 (HPE) and Thr243. Position 297 (Cys297) interacts with [4Fe-4S] cluster.

This sequence belongs to the quinolinate synthase family. Type 1 subfamily. [4Fe-4S] cluster is required as a cofactor.

Its subcellular location is the cytoplasm. It catalyses the reaction iminosuccinate + dihydroxyacetone phosphate = quinolinate + phosphate + 2 H2O + H(+). It participates in cofactor biosynthesis; NAD(+) biosynthesis; quinolinate from iminoaspartate: step 1/1. Functionally, catalyzes the condensation of iminoaspartate with dihydroxyacetone phosphate to form quinolinate. This chain is Quinolinate synthase, found in Escherichia fergusonii (strain ATCC 35469 / DSM 13698 / CCUG 18766 / IAM 14443 / JCM 21226 / LMG 7866 / NBRC 102419 / NCTC 12128 / CDC 0568-73).